The primary structure comprises 491 residues: Cytochrome P450 2F1 (491 aa).

Residue cysteine 436 coordinates heme.

It belongs to the cytochrome P450 family. It depends on heme as a cofactor. Expressed in lung. Rarely detected in liver and placenta.

The protein localises to the endoplasmic reticulum membrane. It is found in the microsome membrane. The enzyme catalyses an organic molecule + reduced [NADPH--hemoprotein reductase] + O2 = an alcohol + oxidized [NADPH--hemoprotein reductase] + H2O + H(+). In terms of biological role, may be involved in the metabolism of various pneumotoxicants including naphthalene. Is able to dealkylate ethoxycoumarin, propoxycoumarin, and pentoxyresorufin but possesses no activity toward ethoxyresorufin and only trace dearylation activity toward benzyloxyresorufin. Bioactivates 3-methylindole (3MI) by dehydrogenation to the putative electrophile 3-methylene-indolenine. The protein is Cytochrome P450 2F1 (CYP2F1) of Homo sapiens (Human).